A 107-amino-acid polypeptide reads, in one-letter code: U1-lycotoxin-Ls1e (107 aa).

The signal sequence occupies residues 1 to 20 (MMKVLVVVALLVTLISYSSS). A propeptide spanning residues 21 to 41 (EGIDDLEADELLSLMANEQTR) is cleaved from the precursor. 4 disulfides stabilise this stretch: Cys-44-Cys-59, Cys-51-Cys-68, Cys-58-Cys-86, and Cys-70-Cys-84.

Belongs to the neurotoxin 19 (CSTX) family. 04 (U1-Lctx) subfamily. In terms of tissue distribution, expressed by the venom gland.

It is found in the secreted. The sequence is that of U1-lycotoxin-Ls1e from Lycosa singoriensis (Wolf spider).